Reading from the N-terminus, the 332-residue chain is Tryptophan--tRNA ligase (332 aa).

Residues 11–13 and 19–20 contribute to the ATP site; these read QPS and GN. The short motif at 12–20 is the 'HIGH' region element; sequence PSGELTIGN. Asp-135 is a binding site for L-tryptophan. Residues 147–149, Val-186, and 195–199 each bind ATP; these read GQD and KMSKS. The 'KMSKS' region motif lies at 195 to 199; it reads KMSKS.

This sequence belongs to the class-I aminoacyl-tRNA synthetase family. As to quaternary structure, homodimer.

It is found in the cytoplasm. The catalysed reaction is tRNA(Trp) + L-tryptophan + ATP = L-tryptophyl-tRNA(Trp) + AMP + diphosphate + H(+). Its function is as follows. Catalyzes the attachment of tryptophan to tRNA(Trp). The sequence is that of Tryptophan--tRNA ligase from Shewanella oneidensis (strain ATCC 700550 / JCM 31522 / CIP 106686 / LMG 19005 / NCIMB 14063 / MR-1).